The chain runs to 258 residues: Small ribosomal subunit protein mS40 (258 aa).

Residues M1–K35 constitute a mitochondrion transit peptide. Phosphoserine is present on residues S38 and S49. Residues R218–L258 are disordered. The span at G229–A242 shows a compositional bias: pro residues. Over residues F248–L258 the composition is skewed to polar residues.

Belongs to the bacterial ribosomal protein bS18 family. Mitochondrion-specific ribosomal protein mS40 subfamily. Component of the mitochondrial ribosome small subunit (28S) which comprises a 12S rRNA and about 30 distinct proteins.

It is found in the mitochondrion. This is Small ribosomal subunit protein mS40 (MRPS18B) from Macaca mulatta (Rhesus macaque).